The following is a 310-amino-acid chain: Oxygen-dependent coproporphyrinogen-III oxidase (310 aa).

Position 92 (serine 92) interacts with substrate. The a divalent metal cation site is built by histidine 96 and histidine 106. Histidine 106 acts as the Proton donor in catalysis. Residue 108-110 (NVR) coordinates substrate. 2 residues coordinate a divalent metal cation: histidine 145 and histidine 175. The tract at residues 240–275 (YVEFNLIWDRGTLFGLQSGGRTESILMSMPPLARWE) is important for dimerization. Substrate is bound at residue 258–260 (GGR).

The protein belongs to the aerobic coproporphyrinogen-III oxidase family. In terms of assembly, homodimer. Requires a divalent metal cation as cofactor.

It localises to the cytoplasm. It catalyses the reaction coproporphyrinogen III + O2 + 2 H(+) = protoporphyrinogen IX + 2 CO2 + 2 H2O. It functions in the pathway porphyrin-containing compound metabolism; protoporphyrin-IX biosynthesis; protoporphyrinogen-IX from coproporphyrinogen-III (O2 route): step 1/1. Its function is as follows. Involved in the heme biosynthesis. Catalyzes the aerobic oxidative decarboxylation of propionate groups of rings A and B of coproporphyrinogen-III to yield the vinyl groups in protoporphyrinogen-IX. The polypeptide is Oxygen-dependent coproporphyrinogen-III oxidase (Pectobacterium atrosepticum (strain SCRI 1043 / ATCC BAA-672) (Erwinia carotovora subsp. atroseptica)).